The following is a 363-amino-acid chain: Pyrimidine monooxygenase RutA (363 aa).

Residues 49 to 50 (IK), Asn-115, Glu-124, 140 to 141 (RY), and Ser-190 contribute to the FMN site.

Belongs to the NtaA/SnaA/DszA monooxygenase family. RutA subfamily.

It carries out the reaction uracil + FMNH2 + NADH + O2 = (Z)-3-ureidoacrylate + FMN + NAD(+) + H2O + H(+). The enzyme catalyses thymine + FMNH2 + NADH + O2 = (Z)-2-methylureidoacrylate + FMN + NAD(+) + H2O + H(+). In terms of biological role, catalyzes the pyrimidine ring opening between N-3 and C-4 by an unusual flavin hydroperoxide-catalyzed mechanism, adding oxygen atoms in the process to yield ureidoacrylate peracid, that immediately reacts with FMN forming ureidoacrylate and FMN-N(5)-oxide. The FMN-N(5)-oxide reacts spontaneously with NADH to produce FMN. Requires the flavin reductase RutF to regenerate FMN in vivo. This is Pyrimidine monooxygenase RutA from Rhizobium rhizogenes (strain K84 / ATCC BAA-868) (Agrobacterium radiobacter).